A 208-amino-acid chain; its full sequence is Imidazole glycerol phosphate synthase subunit HisH (208 aa).

The region spanning 1–206 (MIVIIDYDTG…KEVTYSCKSS (206 aa)) is the Glutamine amidotransferase type-1 domain. The Nucleophile role is filled by C79. Active-site residues include H181 and E183.

Heterodimer of HisH and HisF.

The protein resides in the cytoplasm. It carries out the reaction 5-[(5-phospho-1-deoxy-D-ribulos-1-ylimino)methylamino]-1-(5-phospho-beta-D-ribosyl)imidazole-4-carboxamide + L-glutamine = D-erythro-1-(imidazol-4-yl)glycerol 3-phosphate + 5-amino-1-(5-phospho-beta-D-ribosyl)imidazole-4-carboxamide + L-glutamate + H(+). The enzyme catalyses L-glutamine + H2O = L-glutamate + NH4(+). It participates in amino-acid biosynthesis; L-histidine biosynthesis; L-histidine from 5-phospho-alpha-D-ribose 1-diphosphate: step 5/9. Functionally, IGPS catalyzes the conversion of PRFAR and glutamine to IGP, AICAR and glutamate. The HisH subunit catalyzes the hydrolysis of glutamine to glutamate and ammonia as part of the synthesis of IGP and AICAR. The resulting ammonia molecule is channeled to the active site of HisF. The sequence is that of Imidazole glycerol phosphate synthase subunit HisH from Listeria monocytogenes serotype 4a (strain HCC23).